We begin with the raw amino-acid sequence, 307 residues long: Porphobilinogen deaminase (307 aa).

Residue Cys-241 is modified to S-(dipyrrolylmethanemethyl)cysteine.

It belongs to the HMBS family. In terms of assembly, monomer. It depends on dipyrromethane as a cofactor.

The enzyme catalyses 4 porphobilinogen + H2O = hydroxymethylbilane + 4 NH4(+). The protein operates within porphyrin-containing compound metabolism; protoporphyrin-IX biosynthesis; coproporphyrinogen-III from 5-aminolevulinate: step 2/4. Its function is as follows. Tetrapolymerization of the monopyrrole PBG into the hydroxymethylbilane pre-uroporphyrinogen in several discrete steps. The sequence is that of Porphobilinogen deaminase from Coxiella burnetii (strain CbuG_Q212) (Coxiella burnetii (strain Q212)).